Consider the following 487-residue polypeptide: Cytochrome P450 720B2 (487 aa).

Residues 14 to 34 (WLVGLLCLVLGFLLLQLYKLV) traverse the membrane as a helical segment. C436 provides a ligand contact to heme.

It belongs to the cytochrome P450 family. Heme serves as cofactor.

It is found in the membrane. This Pinus taeda (Loblolly pine) protein is Cytochrome P450 720B2 (CYP720B2).